The primary structure comprises 315 residues: KH domain-containing protein At5g56140 (315 aa).

2 disordered regions span residues 1–53 and 136–158; these read MMMM…GGLR and SQFP…SPGS. Residues 7–28 are compositionally biased toward gly residues; it reads LGGGGGGGGGSGGGIGGGGGGR. Composition is skewed to polar residues over residues 31–53 and 136–146; these read TYSS…GGLR and SQFPSERSVPS. The region spanning 171 to 238 is the KH domain; sequence DIPVDNYPNF…EHLNEPLHIL (68 aa). The disordered stretch occupies residues 289 to 315; the sequence is REEGSPMSGSVSPYNSLGMKRAKTREG. At Ser300 the chain carries Phosphoserine.

The protein localises to the nucleus. In Arabidopsis thaliana (Mouse-ear cress), this protein is KH domain-containing protein At5g56140.